The following is a 168-amino-acid chain: Disulfide bond formation protein B 2 (168 aa).

Residues methionine 1–threonine 14 are Cytoplasmic-facing. A helical membrane pass occupies residues leucine 15–tryptophan 31. The Periplasmic portion of the chain corresponds to isoleucine 32–tyrosine 49. A disulfide bond links cysteine 41 and cysteine 44. Residues leucine 50 to glycine 64 form a helical membrane-spanning segment. Topologically, residues glycine 65–alanine 69 are cytoplasmic. A helical membrane pass occupies residues leucine 70–valine 87. Topologically, residues arginine 88–methionine 142 are periplasmic. A disulfide bridge links cysteine 100 with cysteine 128. Residues tryptophan 143–alanine 161 form a helical membrane-spanning segment. The Cytoplasmic portion of the chain corresponds to glutamine 162 to alanine 168.

Belongs to the DsbB family.

It localises to the cell inner membrane. Its function is as follows. Required for disulfide bond formation in some periplasmic proteins. Acts by oxidizing the DsbA protein. The chain is Disulfide bond formation protein B 2 from Burkholderia lata (strain ATCC 17760 / DSM 23089 / LMG 22485 / NCIMB 9086 / R18194 / 383).